Reading from the N-terminus, the 378-residue chain is Glutamate 5-kinase (378 aa).

K20 contacts ATP. 3 residues coordinate substrate: S60, D147, and N159. Residues 179 to 180 (TD) and 221 to 227 (TGGMLTK) contribute to the ATP site. Positions 286-364 (RGRVVLDDGA…SQIARILGSM (79 aa)) constitute a PUA domain.

Belongs to the glutamate 5-kinase family.

The protein localises to the cytoplasm. The enzyme catalyses L-glutamate + ATP = L-glutamyl 5-phosphate + ADP. Its pathway is amino-acid biosynthesis; L-proline biosynthesis; L-glutamate 5-semialdehyde from L-glutamate: step 1/2. Its function is as follows. Catalyzes the transfer of a phosphate group to glutamate to form L-glutamate 5-phosphate. The protein is Glutamate 5-kinase of Bordetella pertussis (strain Tohama I / ATCC BAA-589 / NCTC 13251).